A 338-amino-acid polypeptide reads, in one-letter code: Ornithine carbamoyltransferase (338 aa).

Carbamoyl phosphate contacts are provided by residues 56-59, Arg107, and 134-137; these read STRT and HPTQ. Residues Asn168, Asp232, and 236–237 contribute to the L-ornithine site; that span reads SM. Carbamoyl phosphate is bound by residues 274–275 and Arg320; that span reads CL.

Belongs to the aspartate/ornithine carbamoyltransferase superfamily. OTCase family.

It localises to the cytoplasm. It catalyses the reaction carbamoyl phosphate + L-ornithine = L-citrulline + phosphate + H(+). It functions in the pathway amino-acid degradation; L-arginine degradation via ADI pathway; carbamoyl phosphate from L-arginine: step 2/2. Reversibly catalyzes the transfer of the carbamoyl group from carbamoyl phosphate (CP) to the N(epsilon) atom of ornithine (ORN) to produce L-citrulline. In Buchnera aphidicola subsp. Acyrthosiphon pisum (strain 5A), this protein is Ornithine carbamoyltransferase.